Consider the following 206-residue polypeptide: Guanylate kinase (206 aa).

The Guanylate kinase-like domain maps to 6–184 (GTLYIISAPS…ALDDLKAIFR (179 aa)). 13–20 (APSGAGKS) provides a ligand contact to ATP.

The protein belongs to the guanylate kinase family.

The protein localises to the cytoplasm. The catalysed reaction is GMP + ATP = GDP + ADP. Essential for recycling GMP and indirectly, cGMP. This chain is Guanylate kinase, found in Pseudomonas fluorescens (strain Pf0-1).